The sequence spans 266 residues: Nickel import ATP-binding protein NikE (266 aa).

Residues 4–252 (ISADNIVKIY…RHPASRLLRE (249 aa)) form the ABC transporter domain. Residue 45–52 (GRSGCGKS) participates in ATP binding.

It belongs to the ABC transporter superfamily. Nickel importer (TC 3.A.1.5.3) family. The complex is composed of two ATP-binding proteins (NikD and NikE), two transmembrane proteins (NikB and NikC) and a solute-binding protein (NikA).

Its subcellular location is the cell inner membrane. It carries out the reaction Ni(2+)(out) + ATP + H2O = Ni(2+)(in) + ADP + phosphate + H(+). Functionally, part of the ABC transporter complex NikABCDE involved in nickel import. Responsible for energy coupling to the transport system. The polypeptide is Nickel import ATP-binding protein NikE (Brucella abortus (strain 2308)).